Here is a 526-residue protein sequence, read N- to C-terminus: GMP synthase [glutamine-hydrolyzing] (526 aa).

Positions 13 to 204 constitute a Glutamine amidotransferase type-1 domain; that stretch reads TVLVVDFGAQ…LYRGAGLSPD (192 aa). Catalysis depends on Cys-90, which acts as the Nucleophile. Catalysis depends on residues His-178 and Glu-180. A GMPS ATP-PPase domain is found at 205 to 400; it reads WTTGNVIEEQ…LGLPDEIVQR (196 aa). ATP is bound at residue 232 to 238; sequence SGGVDSA.

Homodimer.

The catalysed reaction is XMP + L-glutamine + ATP + H2O = GMP + L-glutamate + AMP + diphosphate + 2 H(+). It participates in purine metabolism; GMP biosynthesis; GMP from XMP (L-Gln route): step 1/1. Catalyzes the synthesis of GMP from XMP. The polypeptide is GMP synthase [glutamine-hydrolyzing] (guaA) (Streptomyces coelicolor (strain ATCC BAA-471 / A3(2) / M145)).